The chain runs to 660 residues: MKAVIFAYHDMGCQGVQAVLDAGYEIAAIFTHADNPAENTFFGSVSRLAAELGIPVYAPDNVNHPIWVDRIAELAPDIIFSFYYRNLLSEEILHLAPAGAFNLHGSLLPAYRGRAPLNWVLVNGESETGVTLHRMVKRADAGEIVASQRVAIAQDDVALTLHHKLCQAARQLLNSILPTMKCGDIPSVPQRESDATYYGRRRPEDGLIDWHKPVSTVHNLVRAVAAPWPGAFSYNGSQKFTIWSSRICPDAQGALPGSVISVSPLRVACADGALEIITGQAGDGITVQGSQLAQTLGLVAGARLNRPPATSGKRRIRVLILGVNGFIGNHLTERLLNEENYEVYGMDIGSNAISRFLLHPRFHFVEGDISIHSEWIEYHVKKCDVVLPLVAIATPIEYTRNPLRVFELDFEENLRIIRYCVKYRKRVVFPSTSEVYGMCTDASFDEDKSNLIVGPVNKPRWIYSVSKQLLDRVIWAYGEKEGLRFTLFRPFNWMGPRLDSLNAARIGSSRAITQLILNLVEGTPIKLIDGGQQKRCFTDIRDGIEALFRIIVNDGDRCDGKIINIGNPDNEASIQELATLLLDSFDKHPLRCHFPPFAGFQVVESRSYYGKGYQDVAHRKPSIDNARRCLGWEPSIAMRDTVEETLDFFLRSVDVAERAS.

Positions 1–304 are formyltransferase ArnAFT; that stretch reads MKAVIFAYHD…TLGLVAGARL (304 aa). The active-site Proton donor; for formyltransferase activity is H104. (6R)-10-formyltetrahydrofolate-binding positions include R114 and 136–140; that span reads VKRAD. A dehydrogenase ArnADH region spans residues 314-660; the sequence is RRIRVLILGV…RSVDVAERAS (347 aa). Residues D347 and 368–369 each bind NAD(+); that span reads DI. UDP-alpha-D-glucuronate-binding positions include A393, Y398, and 432–433; that span reads TS. E434 serves as the catalytic Proton acceptor; for decarboxylase activity. UDP-alpha-D-glucuronate is bound by residues R460, N492, 526-535, and Y613; that span reads KLIDGGQQKR. The active-site Proton donor; for decarboxylase activity is R619.

This sequence in the N-terminal section; belongs to the Fmt family. UDP-L-Ara4N formyltransferase subfamily. It in the C-terminal section; belongs to the NAD(P)-dependent epimerase/dehydratase family. UDP-glucuronic acid decarboxylase subfamily. In terms of assembly, homohexamer, formed by a dimer of trimers.

It carries out the reaction UDP-alpha-D-glucuronate + NAD(+) = UDP-beta-L-threo-pentopyranos-4-ulose + CO2 + NADH. It catalyses the reaction UDP-4-amino-4-deoxy-beta-L-arabinose + (6R)-10-formyltetrahydrofolate = UDP-4-deoxy-4-formamido-beta-L-arabinose + (6S)-5,6,7,8-tetrahydrofolate + H(+). It participates in nucleotide-sugar biosynthesis; UDP-4-deoxy-4-formamido-beta-L-arabinose biosynthesis; UDP-4-deoxy-4-formamido-beta-L-arabinose from UDP-alpha-D-glucuronate: step 1/3. It functions in the pathway nucleotide-sugar biosynthesis; UDP-4-deoxy-4-formamido-beta-L-arabinose biosynthesis; UDP-4-deoxy-4-formamido-beta-L-arabinose from UDP-alpha-D-glucuronate: step 3/3. Its pathway is bacterial outer membrane biogenesis; lipopolysaccharide biosynthesis. Functionally, bifunctional enzyme that catalyzes the oxidative decarboxylation of UDP-glucuronic acid (UDP-GlcUA) to UDP-4-keto-arabinose (UDP-Ara4O) and the addition of a formyl group to UDP-4-amino-4-deoxy-L-arabinose (UDP-L-Ara4N) to form UDP-L-4-formamido-arabinose (UDP-L-Ara4FN). The modified arabinose is attached to lipid A and is required for resistance to polymyxin and cationic antimicrobial peptides. This Salmonella enteritidis PT4 (strain P125109) protein is Bifunctional polymyxin resistance protein ArnA.